The sequence spans 504 residues: Endochitinase (504 aa).

The signal sequence occupies residues 1–22 (MNRTTLILFFIILSNTITVIHG). The GH18 domain occupies 23 to 392 (YVRGCYYTNW…NAISSELEGE (370 aa)). A disulfide bridge connects residues cysteine 27 and cysteine 52. Residues 78–79 (TE) and 105–108 (GGYN) each bind chitin. The Proton donor role is filled by glutamate 148. Residues tyrosine 149, 212–215 (MSYD), and tryptophan 362 contribute to the chitin site. The segment at 389–450 (LEGESENPEI…YDTDETEGQE (62 aa)) is disordered. Residues 396-408 (PEITTEEPSITET) show a composition bias toward low complexity. Repeat copies occupy residues 407 to 420 (ETEA…EETS) and 421 to 434 (ETEA…EETS). The interval 407–448 (ETEAYETDETEETSETEAYDTDETEETSETEATTYDTDETEG) is 3 X 14 AA approximate tandem repeats of E-T-E-A-Y-[ED]-T-D-E-T-E-E-T-S. Residues 409–435 (EAYETDETEETSETEAYDTDETEETSE) are compositionally biased toward acidic residues. The 3; approximate repeat unit spans residues 435-448 (ETEATTYDTDETEG). One can recognise a Chitin-binding type-2 domain in the interval 448–504 (GQECPERDGLFPHPTDCHLFIQCANNIAYVMQCPATTFFNDAIKVCDHMTNAPDTCI). Cysteines 480 and 493 form a disulfide.

Belongs to the glycosyl hydrolase 18 family. Chitinase class II subfamily. In terms of processing, O-glycosylated.

The enzyme catalyses Random endo-hydrolysis of N-acetyl-beta-D-glucosaminide (1-&gt;4)-beta-linkages in chitin and chitodextrins.. In terms of biological role, microfilarial chitinase, which may function to degrade chitin-containing structures in the micro-filaria or in its mosquito vector during parasite development and transmission. The polypeptide is Endochitinase (Brugia malayi (Filarial nematode worm)).